A 44-amino-acid polypeptide reads, in one-letter code: U2-agatoxin-Ao1s (44 aa).

A propeptide spanning residues 1–9 (KKVYSFLKL) is cleaved from the precursor. 3 disulfide bridges follow: C12-C28, C19-C33, and C27-C43.

The protein belongs to the neurotoxin 01 (U2-agtx) family. As to expression, expressed by the venom gland.

The protein resides in the secreted. Functionally, insect active toxin causing rapid but reversible paralysis in crickets. No activity shown in mammals. Does not show effect on mammalian voltage-gated calcium channels. In Agelena orientalis (Funnel-web spider), this protein is U2-agatoxin-Ao1s.